The following is a 312-amino-acid chain: Coproporphyrin III ferrochelatase (312 aa).

Fe-coproporphyrin III is bound by residues tyrosine 13, arginine 30, 46–47 (RY), serine 54, and tyrosine 125. Fe(2+) is bound by residues histidine 182 and glutamate 263.

Belongs to the ferrochelatase family.

It localises to the cytoplasm. The enzyme catalyses Fe-coproporphyrin III + 2 H(+) = coproporphyrin III + Fe(2+). It functions in the pathway porphyrin-containing compound metabolism; protoheme biosynthesis. Its function is as follows. Involved in coproporphyrin-dependent heme b biosynthesis. Catalyzes the insertion of ferrous iron into coproporphyrin III to form Fe-coproporphyrin III. The protein is Coproporphyrin III ferrochelatase of Oceanobacillus iheyensis (strain DSM 14371 / CIP 107618 / JCM 11309 / KCTC 3954 / HTE831).